A 217-amino-acid chain; its full sequence is Ribonuclease HII 2 (217 aa).

Residues 28 to 217 enclose the RNase H type-2 domain; it reads GLLAGVDEAG…VREVLLERRP (190 aa). 3 residues coordinate a divalent metal cation: D34, E35, and D126.

This sequence belongs to the RNase HII family. Mn(2+) serves as cofactor. It depends on Mg(2+) as a cofactor.

It is found in the cytoplasm. It carries out the reaction Endonucleolytic cleavage to 5'-phosphomonoester.. In terms of biological role, endonuclease that specifically degrades the RNA of RNA-DNA hybrids. This is Ribonuclease HII 2 from Methylibium petroleiphilum (strain ATCC BAA-1232 / LMG 22953 / PM1).